The following is a 241-amino-acid chain: Tumor necrosis factor ligand superfamily member 13 (241 aa).

Residues 1–95 (MPASSPGHMG…KDGAKSRRRR (95 aa)) constitute a propeptide that is removed on maturation. The THD domain maps to 107–241 (SVLHLVPVNI…HGTFLGFVKL (135 aa)). N-linked (GlcNAc...) asparagine glycosylation is present at Asn-115. A disulfide bridge connects residues Cys-187 and Cys-202.

The protein belongs to the tumor necrosis factor family. Homotrimer. In terms of processing, the soluble form derives from the membrane form by proteolytic processing.

The protein localises to the secreted. In terms of biological role, cytokine that binds to TNFRSF13B/TACI and to TNFRSF17/BCMA. Plays a role in the regulation of tumor cell growth. May be involved in monocyte/macrophage-mediated immunological processes. The sequence is that of Tumor necrosis factor ligand superfamily member 13 (Tnfsf13) from Mus musculus (Mouse).